We begin with the raw amino-acid sequence, 101 residues long: uncharacterized protein (101 aa).

A helical transmembrane segment spans residues 70–90; it reads VLFIPIILLLPPSCPLTGVTV.

The protein localises to the membrane. This is an uncharacterized protein from Saccharomyces cerevisiae (strain ATCC 204508 / S288c) (Baker's yeast).